The sequence spans 338 residues: Heat-inducible transcription repressor HrcA (338 aa).

It belongs to the HrcA family.

Functionally, negative regulator of class I heat shock genes (grpE-dnaK-dnaJ and groELS operons). Prevents heat-shock induction of these operons. The sequence is that of Heat-inducible transcription repressor HrcA from Bacillus mycoides (strain KBAB4) (Bacillus weihenstephanensis).